The chain runs to 388 residues: Putative F-box/kelch-repeat protein At2g29820 (388 aa).

The segment at 6 to 33 is disordered; it reads EILDGPNGDDPNNNPQEGEDNQNENPQE. Residues 9–21 show a composition bias toward low complexity; that stretch reads DGPNGDDPNNNPQ. Residues 22–33 are compositionally biased toward acidic residues; sequence EGEDNQNENPQE. The region spanning 38–84 is the F-box domain; sequence LRNLLELPEELIERLIAHIPRCYYPYISLVSRDFRQVITSDKLFRTR. Kelch repeat units follow at residues 140–187 and 189–233; these read KMYV…EIGG and IYVI…FSTY.

This is Putative F-box/kelch-repeat protein At2g29820 from Arabidopsis thaliana (Mouse-ear cress).